The primary structure comprises 487 residues: MPMIPPALRRTQAAATPTTSSPAASSSTTATLDSQSLCALPRIRVSASTLNSIVTPVKKITSETDVEAWKASAAYSIYTLFLQRVCEACVGKPTRLPTRSTDAPVTPVDKLVSLLWELDSWTQEIEPHEKPQRFGNLAFRDWGARLEERIDSLLSDLLPSRLHAFAVELRVYLLDSFGSFTRIDYGSGHELAFFAWLCFLYRLGFFDASEEQEQDETLADIQVEERIGLDIFPLYLMVVWKLQDRYGLEPAGSHGVWGLDDFQFLPYVIGAAQLRRQSGLRPNQVIGASSHASILQTQLATRTDPASLISTTLVLPASSLVGTQVEVPLPNLYLSSLLRIHVLKRGPFHEHSPLLNDIASSVPNWLKVYFGMLKMYAAECLAKKVVVQHFAFGGVGWVWTHQAHSELPRLATPSAPVAARRHLPLGGIQGNMTSMGVPTPRITRPPATPDSFDHPLRLPPRSTPSRPSTTPSVPPLAASTRPAPKPE.

Disordered stretches follow at residues 1 to 28 (MPMI…SSST) and 426 to 487 (GGIQ…PKPE).

This sequence belongs to the PTPA-type PPIase family.

It localises to the cytoplasm. The protein resides in the nucleus. It catalyses the reaction [protein]-peptidylproline (omega=180) = [protein]-peptidylproline (omega=0). Functionally, PPIases accelerate the folding of proteins. It catalyzes the cis-trans isomerization of proline imidic peptide bonds in oligopeptides. Acts as a regulatory subunit for PP2A-like phosphatases modulating their activity or substrate specificity, probably by inducing a conformational change in the catalytic subunit, a direct target of the PPIase. Can reactivate inactive phosphatase PP2A-phosphatase methylesterase complexes (PP2Ai) in presence of ATP and Mg(2+) by dissociating the inactive form from the complex. In Mycosarcoma maydis (Corn smut fungus), this protein is Serine/threonine-protein phosphatase 2A activator 1 (RRD1).